We begin with the raw amino-acid sequence, 312 residues long: MNNINSNKHISVRLEDAVDSLNIQKDKIYVDCTFGRGGHSFEILKRLSSKGKLFVFDLDLDAKKYFDNNFSKFKNCFFIQDNFKNLKENLAKFDISKVDGFLFDFGVSSPMLDNANRGFSFKLDARLDMRMNQNQELSAYEVINNYSKEKLIQIFWKYGEIRNPVPVVDEIIKYRSNKPIETTLELVDIIRKRTPIKIQREKKHFARTYFQAIRIEVNDELNSIRKALSDALNMLSKNGRIVTISFHSLEEKEIKNTYKDVLESKIPKEVPINNSFDFKIIKIKPKRASSSELEENNRTRSSFLKVIERVNE.

S-adenosyl-L-methionine contacts are provided by residues 37–39, D57, F83, and D104; that span reads GGH.

Belongs to the methyltransferase superfamily. RsmH family.

Its subcellular location is the cytoplasm. It catalyses the reaction cytidine(1402) in 16S rRNA + S-adenosyl-L-methionine = N(4)-methylcytidine(1402) in 16S rRNA + S-adenosyl-L-homocysteine + H(+). Specifically methylates the N4 position of cytidine in position 1402 (C1402) of 16S rRNA. The sequence is that of Ribosomal RNA small subunit methyltransferase H from Malacoplasma penetrans (strain HF-2) (Mycoplasma penetrans).